The sequence spans 327 residues: Flap endonuclease 1 (327 aa).

The tract at residues 1–98 is N-domain; sequence MGVKLKDIIQ…ETIDQRRQTR (98 aa). The Mg(2+) site is built by D27, D80, E152, E154, D173, D175, and D226. The interval 116-246 is I-domain; sequence EARKYAMRSS…KTALKLAKKG (131 aa). Positions 319 to 327 are interaction with PCNA; it reads SQKSLEDWF.

It belongs to the XPG/RAD2 endonuclease family. FEN1 subfamily. In terms of assembly, interacts with PCNA. PCNA stimulates the nuclease activity without altering cleavage specificity. The cofactor is Mg(2+).

In terms of biological role, structure-specific nuclease with 5'-flap endonuclease and 5'-3' exonuclease activities involved in DNA replication and repair. During DNA replication, cleaves the 5'-overhanging flap structure that is generated by displacement synthesis when DNA polymerase encounters the 5'-end of a downstream Okazaki fragment. Binds the unpaired 3'-DNA end and kinks the DNA to facilitate 5' cleavage specificity. Cleaves one nucleotide into the double-stranded DNA from the junction in flap DNA, leaving a nick for ligation. Also involved in the base excision repair (BER) pathway. Acts as a genome stabilization factor that prevents flaps from equilibrating into structures that lead to duplications and deletions. Also possesses 5'-3' exonuclease activity on nicked or gapped double-stranded DNA. The chain is Flap endonuclease 1 from Methanobrevibacter smithii (strain ATCC 35061 / DSM 861 / OCM 144 / PS).